A 562-amino-acid polypeptide reads, in one-letter code: Sulfite reductase [NADPH] hemoprotein beta-component (562 aa).

The [4Fe-4S] cluster site is built by cysteine 428, cysteine 434, cysteine 473, and cysteine 477. Cysteine 477 provides a ligand contact to siroheme.

Belongs to the nitrite and sulfite reductase 4Fe-4S domain family. As to quaternary structure, alpha(8)-beta(8). The alpha component is a flavoprotein, the beta component is a hemoprotein. The cofactor is siroheme. [4Fe-4S] cluster is required as a cofactor.

It carries out the reaction hydrogen sulfide + 3 NADP(+) + 3 H2O = sulfite + 3 NADPH + 4 H(+). Its pathway is sulfur metabolism; hydrogen sulfide biosynthesis; hydrogen sulfide from sulfite (NADPH route): step 1/1. Functionally, component of the sulfite reductase complex that catalyzes the 6-electron reduction of sulfite to sulfide. This is one of several activities required for the biosynthesis of L-cysteine from sulfate. The protein is Sulfite reductase [NADPH] hemoprotein beta-component of Myxococcus xanthus (strain DK1622).